The sequence spans 306 residues: Lipoyl synthase (306 aa).

[4Fe-4S] cluster-binding residues include C55, C60, C66, C81, C85, C88, and S294. In terms of domain architecture, Radical SAM core spans 67 to 283 (WNHRTATFLL…RSYALARGFT (217 aa)).

This sequence belongs to the radical SAM superfamily. Lipoyl synthase family. [4Fe-4S] cluster is required as a cofactor.

The protein resides in the cytoplasm. It catalyses the reaction [[Fe-S] cluster scaffold protein carrying a second [4Fe-4S](2+) cluster] + N(6)-octanoyl-L-lysyl-[protein] + 2 oxidized [2Fe-2S]-[ferredoxin] + 2 S-adenosyl-L-methionine + 4 H(+) = [[Fe-S] cluster scaffold protein] + N(6)-[(R)-dihydrolipoyl]-L-lysyl-[protein] + 4 Fe(3+) + 2 hydrogen sulfide + 2 5'-deoxyadenosine + 2 L-methionine + 2 reduced [2Fe-2S]-[ferredoxin]. Its pathway is protein modification; protein lipoylation via endogenous pathway; protein N(6)-(lipoyl)lysine from octanoyl-[acyl-carrier-protein]: step 2/2. Catalyzes the radical-mediated insertion of two sulfur atoms into the C-6 and C-8 positions of the octanoyl moiety bound to the lipoyl domains of lipoate-dependent enzymes, thereby converting the octanoylated domains into lipoylated derivatives. The sequence is that of Lipoyl synthase from Chloroflexus aurantiacus (strain ATCC 29364 / DSM 637 / Y-400-fl).